We begin with the raw amino-acid sequence, 177 residues long: Large ribosomal subunit protein uL6 (177 aa).

It belongs to the universal ribosomal protein uL6 family. In terms of assembly, part of the 50S ribosomal subunit.

Its function is as follows. This protein binds to the 23S rRNA, and is important in its secondary structure. It is located near the subunit interface in the base of the L7/L12 stalk, and near the tRNA binding site of the peptidyltransferase center. The polypeptide is Large ribosomal subunit protein uL6 (Rhodopseudomonas palustris (strain BisB18)).